Consider the following 346-residue polypeptide: Histone PARylation factor 1 (346 aa).

Met1 bears the N-acetylmethionine mark. The span at 1-10 shows a compositional bias: basic residues; the sequence is MVGGGAKRRL. Positions 1–29 are disordered; it reads MVGGGAKRRLRGEGPQCEKPVDMKKSKSC. Lys19 is subject to N6-acetyllysine. Basic and acidic residues predominate over residues 19 to 29; that stretch reads KPVDMKKSKSC. At Ser97 the chain carries ADP-ribosylserine. N6-acetyllysine occurs at positions 186 and 233. Residue Asp235 is modified to PolyADP-ribosyl aspartic acid. Tyr238 is subject to ADP-ribosyltyrosine. PolyADP-ribosyl glutamic acid is present on Glu240. Residues 242–346 are interaction with PARP1; the sequence is PETDASLRRI…SQDDVDQLAA (105 aa). Glu284 functions as the Proton donor in the catalytic mechanism.

The protein belongs to the HPF1 family. Interacts with PARP1 (via the PARP catalytic domain). Interacts with PARP2 (via the PARP catalytic domain). Interacts with core nucleosomes in a PARP1- and PARP2-dependent manner.

It localises to the chromosome. Its subcellular location is the nucleus. Functionally, cofactor for serine ADP-ribosylation that confers serine specificity on PARP1 and PARP2 and plays a key role in DNA damage response. Initiates the repair of double-strand DNA breaks: recruited to DNA damage sites by PARP1 and PARP2 and switches the amino acid specificity of PARP1 and PARP2 from aspartate or glutamate to serine residues, licensing serine ADP-ribosylation of target proteins. Serine ADP-ribosylation of target proteins, such as histones, promotes decompaction of chromatin and the recruitment of repair factors leading to the reparation of DNA strand breaks. Serine ADP-ribosylation of proteins constitutes the primary form of ADP-ribosylation of proteins in response to DNA damage. HPF1 acts by completing the active site of PARP1 and PARP2: forms a composite active site composed of residues from HPF1 and PARP1 or PARP2. While HPF1 promotes the initiation of serine ADP-ribosylation, it restricts the polymerase activity of PARP1 and PARP2 in order to limit the length of poly-ADP-ribose chains. HPF1 also promotes tyrosine ADP-ribosylation, probably by conferring tyrosine specificity on PARP1. The chain is Histone PARylation factor 1 from Bos taurus (Bovine).